Consider the following 304-residue polypeptide: UDP-3-O-acyl-N-acetylglucosamine deacetylase (304 aa).

Zn(2+)-binding residues include H78, H235, and D239. H262 (proton donor) is an active-site residue.

This sequence belongs to the LpxC family. It depends on Zn(2+) as a cofactor.

The enzyme catalyses a UDP-3-O-[(3R)-3-hydroxyacyl]-N-acetyl-alpha-D-glucosamine + H2O = a UDP-3-O-[(3R)-3-hydroxyacyl]-alpha-D-glucosamine + acetate. It participates in glycolipid biosynthesis; lipid IV(A) biosynthesis; lipid IV(A) from (3R)-3-hydroxytetradecanoyl-[acyl-carrier-protein] and UDP-N-acetyl-alpha-D-glucosamine: step 2/6. In terms of biological role, catalyzes the hydrolysis of UDP-3-O-myristoyl-N-acetylglucosamine to form UDP-3-O-myristoylglucosamine and acetate, the committed step in lipid A biosynthesis. This is UDP-3-O-acyl-N-acetylglucosamine deacetylase from Anaeromyxobacter sp. (strain Fw109-5).